Reading from the N-terminus, the 294-residue chain is Segregation and condensation protein A (294 aa).

The protein belongs to the ScpA family. As to quaternary structure, component of a cohesin-like complex composed of ScpA, ScpB and the Smc homodimer, in which ScpA and ScpB bind to the head domain of Smc. The presence of the three proteins is required for the association of the complex with DNA.

It is found in the cytoplasm. In terms of biological role, participates in chromosomal partition during cell division. May act via the formation of a condensin-like complex containing Smc and ScpB that pull DNA away from mid-cell into both cell halves. The chain is Segregation and condensation protein A from Ureaplasma parvum serovar 3 (strain ATCC 700970).